Reading from the N-terminus, the 269-residue chain is uncharacterized protein (269 aa).

ATP contacts are provided by residues 12-19 (GKGGTGKS) and 130-137 (GYLIVGKS).

It to M.jannaschii MJ0578.

This is an uncharacterized protein from Methanocaldococcus jannaschii (strain ATCC 43067 / DSM 2661 / JAL-1 / JCM 10045 / NBRC 100440) (Methanococcus jannaschii).